Here is a 154-residue protein sequence, read N- to C-terminus: MIYLASSAMSEIVMFVAVLLIAAFVAGILTTSTYKISLNINKKGDALATKLSQDFEIINDPGDIVRNSSAGTIALYIKNTGKDPIIFTNDSFTVIIDGSIVEINTTNQLTSPGSNILSPGDVGEIVVNYNETGYHRIKVISECGISRIIRGYIS.

Residues 9–29 (MSEIVMFVAVLLIAAFVAGIL) form a helical membrane-spanning segment.

The protein belongs to the archaeal FlaG family.

It localises to the cell membrane. The protein resides in the archaeal flagellum. In Methanocaldococcus jannaschii (strain ATCC 43067 / DSM 2661 / JAL-1 / JCM 10045 / NBRC 100440) (Methanococcus jannaschii), this protein is Putative flagella-related protein G (flaG).